An 84-amino-acid chain; its full sequence is MKNGCNPCVIIDLFKGDKGLLEKLNGDTVYGISVITLFELQCGSLKEREEIFLEKIPKLNFEESSAKLAGKIFRELKKGAEFQR.

It to M.jannaschii MJ1121.

This is an uncharacterized protein from Archaeoglobus fulgidus (strain ATCC 49558 / DSM 4304 / JCM 9628 / NBRC 100126 / VC-16).